The chain runs to 409 residues: U-box domain-containing protein 28 (409 aa).

Residues 10-84 enclose the U-box domain; sequence TVPCFFKCPI…DHWSDSINRR (75 aa). ARM repeat units lie at residues 178 to 218, 219 to 261, and 263 to 304; these read RLSN…FIAV, DAES…AIAS, and KRVK…AISS.

It carries out the reaction S-ubiquitinyl-[E2 ubiquitin-conjugating enzyme]-L-cysteine + [acceptor protein]-L-lysine = [E2 ubiquitin-conjugating enzyme]-L-cysteine + N(6)-ubiquitinyl-[acceptor protein]-L-lysine.. It functions in the pathway protein modification; protein ubiquitination. Functions as an E3 ubiquitin ligase. The protein is U-box domain-containing protein 28 (PUB28) of Arabidopsis thaliana (Mouse-ear cress).